The chain runs to 592 residues: Glutamine-rich protein 2 (592 aa).

The segment at 488 to 592 (QLQQAQHARP…TRGPRSTAAH (105 aa)) is disordered. The segment covering 544 to 567 (LQSNVSHSSIPTDIASLQGSQQGL) has biased composition (polar residues).

Interacts with AKAP3, ODF2 and TSSK4. Interacts with AKAP4. As to expression, expressed in testis. Not detected in heart, brain, kidney, stomach, ovary, liver, lung and uterus.

It localises to the nucleus membrane. The protein resides in the nucleus. Its subcellular location is the cytoplasm. It is found in the cell projection. The protein localises to the cilium. It localises to the flagellum. Functionally, has an essential role in the formation of sperm flagella and flagellar structure maintainance. It acts as a suppressor of ubiquitination and degradation of proteins involved in flagellar development and motility. This chain is Glutamine-rich protein 2, found in Mus musculus (Mouse).